The chain runs to 548 residues: Glucose-6-phosphate isomerase (548 aa).

E355 (proton donor) is an active-site residue. Residues H386 and K514 contribute to the active site.

Belongs to the GPI family.

The protein resides in the cytoplasm. It catalyses the reaction alpha-D-glucose 6-phosphate = beta-D-fructose 6-phosphate. Its pathway is carbohydrate biosynthesis; gluconeogenesis. It functions in the pathway carbohydrate degradation; glycolysis; D-glyceraldehyde 3-phosphate and glycerone phosphate from D-glucose: step 2/4. In terms of biological role, catalyzes the reversible isomerization of glucose-6-phosphate to fructose-6-phosphate. This chain is Glucose-6-phosphate isomerase, found in Hamiltonella defensa subsp. Acyrthosiphon pisum (strain 5AT).